A 209-amino-acid polypeptide reads, in one-letter code: Uracil phosphoribosyltransferase (209 aa).

Residues R79, R104, and 131-139 (DPMLATGGS) contribute to the 5-phospho-alpha-D-ribose 1-diphosphate site. Uracil is bound by residues V194 and 199-201 (GDA). D200 serves as a coordination point for 5-phospho-alpha-D-ribose 1-diphosphate.

Belongs to the UPRTase family. Mg(2+) serves as cofactor.

The catalysed reaction is UMP + diphosphate = 5-phospho-alpha-D-ribose 1-diphosphate + uracil. Its pathway is pyrimidine metabolism; UMP biosynthesis via salvage pathway; UMP from uracil: step 1/1. Allosterically activated by GTP. In terms of biological role, catalyzes the conversion of uracil and 5-phospho-alpha-D-ribose 1-diphosphate (PRPP) to UMP and diphosphate. This chain is Uracil phosphoribosyltransferase, found in Bacillus cytotoxicus (strain DSM 22905 / CIP 110041 / 391-98 / NVH 391-98).